Here is a 194-residue protein sequence, read N- to C-terminus: Thymidine kinase (194 aa).

Residues 15–22 (GCMFSGKT) and 88–91 (DELH) contribute to the ATP site. Catalysis depends on E89, which acts as the Proton acceptor. Zn(2+) contacts are provided by C148, C151, C186, and C189.

The protein belongs to the thymidine kinase family. Homotetramer.

It is found in the cytoplasm. The catalysed reaction is thymidine + ATP = dTMP + ADP + H(+). This chain is Thymidine kinase, found in Roseiflexus castenholzii (strain DSM 13941 / HLO8).